Consider the following 451-residue polypeptide: uncharacterized protein (451 aa).

Positions 1-18 (MRTRITLALAVLLLLLAG) are cleaved as a signal peptide. C19 carries the N-palmitoyl cysteine lipid modification. C19 carries S-diacylglycerol cysteine lipidation. Positions 424-451 (TSADPPPGVPRAGKRNIRDATSRLPSTP) are disordered.

The protein localises to the cell membrane. In terms of biological role, may participate in oleandomycin glycosylation and secretion during antibiotic production. This is an uncharacterized protein from Streptomyces antibioticus.